The sequence spans 96 residues: MF6 protein (96 aa).

The protein is MF6 protein of Myxoma virus (strain Uriarra) (MYXV).